A 798-amino-acid polypeptide reads, in one-letter code: Integrin beta-1-B (798 aa).

The signal sequence occupies residues 1-21; sequence MARYPVFTFVFLICLVLCTNA. Residues 22–727 are Extracellular-facing; sequence QQGGTECLKA…VKEPECPSGP (706 aa). The region spanning 27 to 77 is the PSI domain; sequence ECLKANAKSCGECIQAGPNCGWCTKVDFLQEGEPTSARCDDLAALKTKGCP. 28 disulfides stabilise this stretch: Cys28-Cys46, Cys36-Cys464, Cys39-Cys65, Cys49-Cys76, Cys206-Cys212, Cys260-Cys300, Cys400-Cys414, Cys434-Cys462, Cys466-Cys486, Cys477-Cys489, Cys491-Cys500, Cys502-Cys533, Cys516-Cys531, Cys525-Cys536, Cys538-Cys553, Cys555-Cys576, Cys560-Cys574, Cys568-Cys579, Cys581-Cys590, Cys592-Cys615, Cys599-Cys613, Cys607-Cys618, Cys620-Cys630, Cys633-Cys636, Cys640-Cys691, Cys646-Cys665, Cys649-Cys661, and Cys699-Cys723. Residues 77–106 form a disordered region; the sequence is PEDDIQNPRGRKQKLKDIPITSKGKGERMD. N-linked (GlcNAc...) asparagine glycans are attached at residues Asn109 and Asn131. Residues 139–377 enclose the VWFA domain; sequence DYPIDLYYLM…QLIIDSYNSL (239 aa). Positions 151 and 153 each coordinate Mg(2+). Ser153, Asp156, Asp157, and Glu188 together coordinate Ca(2+). Residues Asn211 and Asn223 are each glycosylated (N-linked (GlcNAc...) asparagine). 4 residues coordinate Ca(2+): Asn243, Asp245, Pro247, and Glu248. A Mg(2+)-binding site is contributed by Glu248. N-linked (GlcNAc...) asparagine glycans are attached at residues Asn268 and Asn362. Residue Asn416 is glycosylated (N-linked (GlcNAc...) asparagine). I-EGF domains are found at residues 466 to 501, 502 to 554, 555 to 591, and 592 to 631; these read CQDK…KECE, CSTD…KYCE, CDNF…SACD, and CSED…PTCE. Residue Asn481 is glycosylated (N-linked (GlcNAc...) asparagine). Residue Asn520 is glycosylated (N-linked (GlcNAc...) asparagine). N-linked (GlcNAc...) asparagine glycosylation occurs at Asn584. N-linked (GlcNAc...) asparagine glycosylation occurs at Asn669. Residues 728–751 traverse the membrane as a helical segment; that stretch reads DIIPIVAGVVAGIVLIGLALLLIW. At 752 to 798 the chain is on the cytoplasmic side; sequence KLLMIIHDRREFAKFEKEKMNAKWDTGENPIYKSAVATVVNPKYEGK. The residue at position 783 (Tyr783) is a Phosphotyrosine.

This sequence belongs to the integrin beta chain family. Heterodimer of an alpha and a beta subunit.

The protein localises to the cell membrane. The protein resides in the cell projection. It is found in the invadopodium membrane. It localises to the ruffle membrane. Its subcellular location is the melanosome. The protein localises to the cleavage furrow. The protein resides in the lamellipodium. It is found in the ruffle. In terms of biological role, beta integrins associate with alpha subunits to form receptor complexes that recognize the sequence R-G-D in a wide array of ligands. May be involved in osteoblast compaction. May play role in myoblast differentiation and fusion during skeletal myogenesis. This Xenopus laevis (African clawed frog) protein is Integrin beta-1-B (itgb1-b).